Reading from the N-terminus, the 547-residue chain is CTP synthase (547 aa).

Residues 1–267 (MTKFVFVTGG…AQQTLALLNL (267 aa)) are amidoligase domain. Serine 13 contributes to the CTP binding site. A UTP-binding site is contributed by serine 13. ATP is bound by residues 14-19 (SIGKGI) and aspartate 71. Mg(2+)-binding residues include aspartate 71 and glutamate 141. CTP-binding positions include 148-150 (DIE), 188-193 (KTKPTQ), and lysine 224. Residues 188 to 193 (KTKPTQ) and lysine 224 contribute to the UTP site. Residues 292–534 (EIALVGKYVQ…VKAAVDHYST (243 aa)) enclose the Glutamine amidotransferase type-1 domain. Glycine 354 contacts L-glutamine. Cysteine 381 (nucleophile; for glutamine hydrolysis) is an active-site residue. L-glutamine contacts are provided by residues 382–385 (LGMQ), glutamate 405, and arginine 462. Residues histidine 507 and glutamate 509 contribute to the active site.

The protein belongs to the CTP synthase family. In terms of assembly, homotetramer.

It catalyses the reaction UTP + L-glutamine + ATP + H2O = CTP + L-glutamate + ADP + phosphate + 2 H(+). The enzyme catalyses L-glutamine + H2O = L-glutamate + NH4(+). The catalysed reaction is UTP + NH4(+) + ATP = CTP + ADP + phosphate + 2 H(+). The protein operates within pyrimidine metabolism; CTP biosynthesis via de novo pathway; CTP from UDP: step 2/2. Allosterically activated by GTP, when glutamine is the substrate; GTP has no effect on the reaction when ammonia is the substrate. The allosteric effector GTP functions by stabilizing the protein conformation that binds the tetrahedral intermediate(s) formed during glutamine hydrolysis. Inhibited by the product CTP, via allosteric rather than competitive inhibition. Functionally, catalyzes the ATP-dependent amination of UTP to CTP with either L-glutamine or ammonia as the source of nitrogen. Regulates intracellular CTP levels through interactions with the four ribonucleotide triphosphates. This Rippkaea orientalis (strain PCC 8801 / RF-1) (Cyanothece sp. (strain PCC 8801)) protein is CTP synthase.